The chain runs to 79 residues: Acyl carrier protein (79 aa).

Residues 2-77 (STIEERVKKI…QAIDYVKVHV (76 aa)) enclose the Carrier domain. Residue S37 is modified to O-(pantetheine 4'-phosphoryl)serine.

It belongs to the acyl carrier protein (ACP) family. Post-translationally, 4'-phosphopantetheine is transferred from CoA to a specific serine of apo-ACP by AcpS. This modification is essential for activity because fatty acids are bound in thioester linkage to the sulfhydryl of the prosthetic group.

The protein resides in the cytoplasm. Its pathway is lipid metabolism; fatty acid biosynthesis. In terms of biological role, carrier of the growing fatty acid chain in fatty acid biosynthesis. The polypeptide is Acyl carrier protein (Xanthomonas albilineans).